The sequence spans 305 residues: Lipoyl synthase (305 aa).

Residues cysteine 41, cysteine 46, cysteine 52, cysteine 68, cysteine 72, cysteine 75, and serine 281 each coordinate [4Fe-4S] cluster. The Radical SAM core domain maps to 54–270 (GARRTATFMI…RKVAMDKGFK (217 aa)). Residues 283 to 298 (HADEQVNEAAKEKQRQ) are compositionally biased toward basic and acidic residues. Residues 283–305 (HADEQVNEAAKEKQRQGEAQLNS) form a disordered region.

This sequence belongs to the radical SAM superfamily. Lipoyl synthase family. It depends on [4Fe-4S] cluster as a cofactor.

The protein resides in the cytoplasm. The catalysed reaction is [[Fe-S] cluster scaffold protein carrying a second [4Fe-4S](2+) cluster] + N(6)-octanoyl-L-lysyl-[protein] + 2 oxidized [2Fe-2S]-[ferredoxin] + 2 S-adenosyl-L-methionine + 4 H(+) = [[Fe-S] cluster scaffold protein] + N(6)-[(R)-dihydrolipoyl]-L-lysyl-[protein] + 4 Fe(3+) + 2 hydrogen sulfide + 2 5'-deoxyadenosine + 2 L-methionine + 2 reduced [2Fe-2S]-[ferredoxin]. Its pathway is protein modification; protein lipoylation via endogenous pathway; protein N(6)-(lipoyl)lysine from octanoyl-[acyl-carrier-protein]. Catalyzes the radical-mediated insertion of two sulfur atoms into the C-6 and C-8 positions of the octanoyl moiety bound to the lipoyl domains of lipoate-dependent enzymes, thereby converting the octanoylated domains into lipoylated derivatives. This chain is Lipoyl synthase, found in Staphylococcus aureus (strain bovine RF122 / ET3-1).